Consider the following 968-residue polypeptide: Glycine dehydrogenase (decarboxylating) (968 aa).

Lys712 bears the N6-(pyridoxal phosphate)lysine mark.

This sequence belongs to the GcvP family. In terms of assembly, the glycine cleavage system is composed of four proteins: P, T, L and H. Requires pyridoxal 5'-phosphate as cofactor.

It catalyses the reaction N(6)-[(R)-lipoyl]-L-lysyl-[glycine-cleavage complex H protein] + glycine + H(+) = N(6)-[(R)-S(8)-aminomethyldihydrolipoyl]-L-lysyl-[glycine-cleavage complex H protein] + CO2. Functionally, the glycine cleavage system catalyzes the degradation of glycine. The P protein binds the alpha-amino group of glycine through its pyridoxal phosphate cofactor; CO(2) is released and the remaining methylamine moiety is then transferred to the lipoamide cofactor of the H protein. This chain is Glycine dehydrogenase (decarboxylating), found in Prochlorococcus marinus (strain NATL2A).